The primary structure comprises 420 residues: Glucose-1-phosphate adenylyltransferase (420 aa).

Residues Y107, G173, 188 to 189 (EK), and S206 each bind alpha-D-glucose 1-phosphate.

Belongs to the bacterial/plant glucose-1-phosphate adenylyltransferase family. As to quaternary structure, homotetramer.

It carries out the reaction alpha-D-glucose 1-phosphate + ATP + H(+) = ADP-alpha-D-glucose + diphosphate. It functions in the pathway glycan biosynthesis; glycogen biosynthesis. Involved in the biosynthesis of ADP-glucose, a building block required for the elongation reactions to produce glycogen. Catalyzes the reaction between ATP and alpha-D-glucose 1-phosphate (G1P) to produce pyrophosphate and ADP-Glc. In Shewanella sp. (strain W3-18-1), this protein is Glucose-1-phosphate adenylyltransferase.